The primary structure comprises 409 residues: Ribose-phosphate pyrophosphokinase 3, chloroplastic (409 aa).

2 stretches are compositionally biased toward low complexity: residues 1-16 and 34-43; these read MATA…PAAA and PASAFARPSP. The segment at 1–43 is disordered; that stretch reads MATAASASASASPAAAFGAKTRRPGPSPSPSPSPASAFARPSP. The N-terminal 44 residues, 1–44, are a transit peptide targeting the chloroplast; the sequence is MATAASASASASPAAAFGAKTRRPGPSPSPSPSPASAFARPSPR. Positions 229 and 231 each coordinate Mg(2+). The interval 312–327 is binding of phosphoribosylpyrophosphate; it reads GRHVVIVDDLVQSGGT.

It belongs to the ribose-phosphate pyrophosphokinase family. Requires Mg(2+) as cofactor.

It localises to the plastid. Its subcellular location is the chloroplast. It carries out the reaction D-ribose 5-phosphate + ATP = 5-phospho-alpha-D-ribose 1-diphosphate + AMP + H(+). This is Ribose-phosphate pyrophosphokinase 3, chloroplastic from Oryza sativa subsp. japonica (Rice).